We begin with the raw amino-acid sequence, 478 residues long: Lysine histidine transporter-like 7 (478 aa).

Over Met1 to Tyr63 the chain is Cytoplasmic. Residues Glu15–Arg45 form a disordered region. The helical transmembrane segment at Thr64–Ala86 threads the bilayer. Topologically, residues Ala87–Gly89 are extracellular. Residues Trp90 to Val112 form a helical membrane-spanning segment. At Gln113 to Lys140 the chain is on the cytoplasmic side. A helical membrane pass occupies residues Leu141–Thr161. The Extracellular segment spans residues Gly162–Asn177. The chain crosses the membrane as a helical span at residues Thr178 to Ser198. Residues Gln199–Ser205 lie on the Cytoplasmic side of the membrane. A helical transmembrane segment spans residues Leu206–Ile226. The Extracellular portion of the chain corresponds to Leu227–Ser241. The chain crosses the membrane as a helical span at residues Tyr242–Val262. Topologically, residues Tyr263–Ala291 are cytoplasmic. A helical transmembrane segment spans residues Val292 to Trp312. At Ala313–Ala340 the chain is on the extracellular side. A helical membrane pass occupies residues Ala341–Met361. The Cytoplasmic portion of the chain corresponds to Pro362 to Ala379. The helical transmembrane segment at Ser380–Phe402 threads the bilayer. Residues Pro403–Pro406 are Extracellular-facing. A helical transmembrane segment spans residues Tyr407 to Ile429. At Ser430–Pro439 the chain is on the cytoplasmic side. Residues Met440–Val460 traverse the membrane as a helical segment. At Ala461 to Pro478 the chain is on the extracellular side.

It belongs to the amino acid/polyamine transporter 2 family. Amino acid/auxin permease (AAAP) (TC 2.A.18.2) subfamily.

The protein localises to the cell membrane. In terms of biological role, amino acid transporter. In Arabidopsis thaliana (Mouse-ear cress), this protein is Lysine histidine transporter-like 7.